The chain runs to 572 residues: Formate--tetrahydrofolate ligase (572 aa).

81–88 serves as a coordination point for ATP; sequence TPAGEGKT.

Belongs to the formate--tetrahydrofolate ligase family.

The enzyme catalyses (6S)-5,6,7,8-tetrahydrofolate + formate + ATP = (6R)-10-formyltetrahydrofolate + ADP + phosphate. Its pathway is one-carbon metabolism; tetrahydrofolate interconversion. The chain is Formate--tetrahydrofolate ligase from Granulibacter bethesdensis (strain ATCC BAA-1260 / CGDNIH1).